The chain runs to 270 residues: Small ribosomal subunit protein eS1 (270 aa).

The disordered stretch occupies residues 235–270 (GTSKGGAASTAAVAKGEEGVKVDRPEGYEPPVLETV). Positions 239 to 248 (GGAASTAAVA) are enriched in low complexity. Basic and acidic residues predominate over residues 249–261 (KGEEGVKVDRPEG).

The protein belongs to the eukaryotic ribosomal protein eS1 family. Component of the small ribosomal subunit. Mature ribosomes consist of a small (40S) and a large (60S) subunit. The 40S subunit contains about 33 different proteins and 1 molecule of RNA (18S). The 60S subunit contains about 49 different proteins and 3 molecules of RNA (28S, 5.8S and 5S).

It localises to the cytoplasm. In Ixodes scapularis (Black-legged tick), this protein is Small ribosomal subunit protein eS1.